The sequence spans 49 residues: Delta-actitoxin-Axm1a (49 aa).

Disulfide bonds link cysteine 4–cysteine 46, cysteine 6–cysteine 36, and cysteine 29–cysteine 47.

Belongs to the sea anemone sodium channel inhibitory toxin family. Type I subfamily.

The protein resides in the secreted. It localises to the nematocyst. In terms of biological role, binds specifically to voltage-gated sodium channels (Nav) (site 3), thereby delaying their inactivation. This toxin retains the greatest capacity to discriminate between the cardiac (Nav1.5/SCN5A) and neuronal sodium channels (2.5 nM versus 120 nM, when electrophysiologically tested and 14 nM versus 400 nM, when tested by ion flux), whereas its paralog Anthopleurin-B has the highest affinity of all anemone toxins for the mammalian sodium channel. Its ability to differentiate between cardiac and skeletal channels appears to be associated with domain 4 of the channel. This toxin does not slow or inhibit closed-state inactivation of cardiac sodium channels, but selectively modifies inactivation from the open-state. It does not display phospholipid-binding activities, suggesting that the domain IV S3-S4 linker is located at the extracellular surface and not buried in the phospholipid bilayer. In Anthopleura xanthogrammica (Giant green sea anemone), this protein is Delta-actitoxin-Axm1a.